A 320-amino-acid polypeptide reads, in one-letter code: Cytochrome f (320 aa).

The signal sequence occupies residues 1–35 (MENRNTFSWVKEQITRSISVSIMIYVITRTSISNA). 4 residues coordinate heme: Tyr-36, Cys-56, Cys-59, and His-60. Residues 286 to 306 (VQGLLFFFASVILAQVFLVLK) traverse the membrane as a helical segment.

It belongs to the cytochrome f family. The 4 large subunits of the cytochrome b6-f complex are cytochrome b6, subunit IV (17 kDa polypeptide, petD), cytochrome f and the Rieske protein, while the 4 small subunits are PetG, PetL, PetM and PetN. The complex functions as a dimer. Heme serves as cofactor.

The protein resides in the plastid. It localises to the chloroplast thylakoid membrane. Component of the cytochrome b6-f complex, which mediates electron transfer between photosystem II (PSII) and photosystem I (PSI), cyclic electron flow around PSI, and state transitions. The polypeptide is Cytochrome f (Hordeum vulgare (Barley)).